An 87-amino-acid polypeptide reads, in one-letter code: uncharacterized protein (87 aa).

This is an uncharacterized protein from Bacillus phage phi105 (Bacteriophage phi-105).